Consider the following 144-residue polypeptide: Large ribosomal subunit protein uL15 (144 aa).

The interval 1–48 (MIKLESLQDPSPRKRRTKLLGRGPSSGHGKTSCRGHKGDGSRSGYKRR) is disordered.

It belongs to the universal ribosomal protein uL15 family. As to quaternary structure, part of the 50S ribosomal subunit.

Functionally, binds to the 23S rRNA. This Chlamydia caviae (strain ATCC VR-813 / DSM 19441 / 03DC25 / GPIC) (Chlamydophila caviae) protein is Large ribosomal subunit protein uL15.